Here is a 185-residue protein sequence, read N- to C-terminus: Glycerol-3-phosphate acyltransferase 4 (185 aa).

The next 6 membrane-spanning stretches (helical) occupy residues 1-21, 47-67, 69-89, 113-133, 137-157, and 158-178; these read MPLLFVLLSYLLGTFPSAYLA, LGRGWGLAVFVFDLAKGSLAI, LALAAGLSPGWVMFCGLAAVL, LLIATQPMLIMGGLGLLVLLF, VIAASAVMFGLLWLAVILYGL, and PGGVVAYSIGLPVVVGLTHFI.

Belongs to the PlsY family. In terms of assembly, probably interacts with PlsX.

The protein resides in the cell membrane. It carries out the reaction an acyl phosphate + sn-glycerol 3-phosphate = a 1-acyl-sn-glycero-3-phosphate + phosphate. The protein operates within lipid metabolism; phospholipid metabolism. Its function is as follows. Catalyzes the transfer of an acyl group from acyl-phosphate (acyl-PO(4)) to glycerol-3-phosphate (G3P) to form lysophosphatidic acid (LPA). This enzyme utilizes acyl-phosphate as fatty acyl donor, but not acyl-CoA or acyl-ACP. This chain is Glycerol-3-phosphate acyltransferase 4, found in Dehalococcoides mccartyi (strain ATCC BAA-2266 / KCTC 15142 / 195) (Dehalococcoides ethenogenes (strain 195)).